Consider the following 100-residue polypeptide: Small ribosomal subunit protein bS20 (100 aa).

Residues 79 to 100 (AAHQKSRLSAAVKQAIEPAPST) are disordered.

It belongs to the bacterial ribosomal protein bS20 family.

Functionally, binds directly to 16S ribosomal RNA. In Prochlorococcus marinus (strain MIT 9303), this protein is Small ribosomal subunit protein bS20.